The sequence spans 569 residues: Potassium-transporting ATPase potassium-binding subunit (569 aa).

10 helical membrane-spanning segments follow: residues 11–31 (LLLA…ACVF), 64–84 (LAYT…LYGI), 135–155 (AGLA…ALAV), 179–199 (LYLL…MGIP), 258–278 (FNIL…GKMV), 285–305 (WALI…VYIA), 384–404 (GLYG…LMVG), 423–443 (MLAV…AAVL), 490–510 (LGIS…AIAG), and 531–551 (LFVG…YFPA).

Belongs to the KdpA family. In terms of assembly, the system is composed of three essential subunits: KdpA, KdpB and KdpC.

The protein resides in the cell inner membrane. Its function is as follows. Part of the high-affinity ATP-driven potassium transport (or Kdp) system, which catalyzes the hydrolysis of ATP coupled with the electrogenic transport of potassium into the cytoplasm. This subunit binds the periplasmic potassium ions and delivers the ions to the membrane domain of KdpB through an intramembrane tunnel. This is Potassium-transporting ATPase potassium-binding subunit from Allorhizobium ampelinum (strain ATCC BAA-846 / DSM 112012 / S4) (Agrobacterium vitis (strain S4)).